The primary structure comprises 278 residues: MLFKFEGDKIKIITAPRKFITINLVVSDYQKKFIEEWKNGNFKIGEVIIKKDSIIIPFKKVVNPKNFEHIMTIDINEKNITYSIFDKDGNVIKTTRLDVYKLKRIHENFSKKREKIQKKLSNKPMKLKTLMEKYSGREKRKVEDYLHKISKFLISEALKYNVKILMEDLTNIREAVNKKSKNFRRRLNRWNFSKLQFFIEYKAKWDGLDVEYVNPSRTSKLCPICGCKLDPNGQRLLKCNNCNLVFDRDVVATFNLFKKSQDVGSFRSPERSLMKSSY.

Cys-222, Cys-225, Cys-239, and Cys-242 together coordinate Zn(2+).

This sequence in the N-terminal section; belongs to the transposase 2 family. It in the C-terminal section; belongs to the transposase 35 family.

The polypeptide is TnpB-like protein MJ0751 (Methanocaldococcus jannaschii (strain ATCC 43067 / DSM 2661 / JAL-1 / JCM 10045 / NBRC 100440) (Methanococcus jannaschii)).